Reading from the N-terminus, the 475-residue chain is Glycogen synthase (475 aa).

Lysine 15 serves as a coordination point for ADP-alpha-D-glucose.

It belongs to the glycosyltransferase 1 family. Bacterial/plant glycogen synthase subfamily.

It catalyses the reaction [(1-&gt;4)-alpha-D-glucosyl](n) + ADP-alpha-D-glucose = [(1-&gt;4)-alpha-D-glucosyl](n+1) + ADP + H(+). The protein operates within glycan biosynthesis; glycogen biosynthesis. Synthesizes alpha-1,4-glucan chains using ADP-glucose. In Chlamydia abortus (strain DSM 27085 / S26/3) (Chlamydophila abortus), this protein is Glycogen synthase.